The following is a 204-amino-acid chain: Large ribosomal subunit protein uL4 (204 aa).

Over residues 42–55 (GSRQGSKAQKNRSA) the composition is skewed to polar residues. The disordered stretch occupies residues 42-85 (GSRQGSKAQKNRSAVSGGGKRPWAQKGTGRARAGTTRGPIWRSG). Residues 68–79 (GTGRARAGTTRG) show a composition bias toward low complexity.

It belongs to the universal ribosomal protein uL4 family. In terms of assembly, part of the 50S ribosomal subunit.

Functionally, one of the primary rRNA binding proteins, this protein initially binds near the 5'-end of the 23S rRNA. It is important during the early stages of 50S assembly. It makes multiple contacts with different domains of the 23S rRNA in the assembled 50S subunit and ribosome. Its function is as follows. Forms part of the polypeptide exit tunnel. The sequence is that of Large ribosomal subunit protein uL4 from Vesicomyosocius okutanii subsp. Calyptogena okutanii (strain HA).